The sequence spans 552 residues: Urocanate hydratase (552 aa).

NAD(+) contacts are provided by residues 49 to 50 (GG), glutamine 127, 173 to 175 (GMG), glutamate 193, arginine 198, 239 to 240 (NA), 260 to 264 (QTSAH), 270 to 271 (YI), and tyrosine 319. Residue cysteine 407 is part of the active site. Residue glycine 489 coordinates NAD(+).

Belongs to the urocanase family. The cofactor is NAD(+).

It localises to the cytoplasm. The catalysed reaction is 4-imidazolone-5-propanoate = trans-urocanate + H2O. It participates in amino-acid degradation; L-histidine degradation into L-glutamate; N-formimidoyl-L-glutamate from L-histidine: step 2/3. In terms of biological role, catalyzes the conversion of urocanate to 4-imidazolone-5-propionate. In Geobacillus sp. (strain WCH70), this protein is Urocanate hydratase.